Consider the following 255-residue polypeptide: Acetylglutamate kinase (255 aa).

Substrate-binding positions include 40–41 (GG), Arg-62, and Asn-153.

It belongs to the acetylglutamate kinase family. ArgB subfamily.

The protein resides in the cytoplasm. It carries out the reaction N-acetyl-L-glutamate + ATP = N-acetyl-L-glutamyl 5-phosphate + ADP. Its pathway is amino-acid biosynthesis; L-arginine biosynthesis; N(2)-acetyl-L-ornithine from L-glutamate: step 2/4. Its function is as follows. Catalyzes the ATP-dependent phosphorylation of N-acetyl-L-glutamate. The sequence is that of Acetylglutamate kinase from Bacillus anthracis (strain CDC 684 / NRRL 3495).